The chain runs to 101 residues: Small ribosomal subunit protein uS14 (101 aa).

This sequence belongs to the universal ribosomal protein uS14 family. Part of the 30S ribosomal subunit. Contacts proteins S3 and S10.

Binds 16S rRNA, required for the assembly of 30S particles and may also be responsible for determining the conformation of the 16S rRNA at the A site. This is Small ribosomal subunit protein uS14 from Chelativorans sp. (strain BNC1).